The primary structure comprises 187 residues: Elongation factor P (187 aa).

It belongs to the elongation factor P family.

It localises to the cytoplasm. Its pathway is protein biosynthesis; polypeptide chain elongation. Involved in peptide bond synthesis. Stimulates efficient translation and peptide-bond synthesis on native or reconstituted 70S ribosomes in vitro. Probably functions indirectly by altering the affinity of the ribosome for aminoacyl-tRNA, thus increasing their reactivity as acceptors for peptidyl transferase. This is Elongation factor P from Rhodococcus erythropolis (strain PR4 / NBRC 100887).